A 374-amino-acid polypeptide reads, in one-letter code: GPN-loop GTPase 1 (374 aa).

An N-acetylalanine modification is found at Ala2. Residue 29 to 34 (GSGKTT) coordinates GTP. Positions 86-88 (GPN) match the Gly-Pro-Asn (GPN)-loop; involved in dimer interface motif. 189 to 192 (NKTD) lines the GTP pocket. Ser301, Ser312, and Ser314 each carry phosphoserine. Residues 326–354 (RGTLDEEDEEADSDTDDIDHRVTEESHEE) form a disordered region. Residue Thr328 is modified to Phosphothreonine. Residues 330–342 (DEEDEEADSDTDD) are compositionally biased toward acidic residues. Ser338 carries the phosphoserine modification. At Thr340 the chain carries Phosphothreonine. The segment covering 343–354 (IDHRVTEESHEE) has biased composition (basic and acidic residues).

The protein belongs to the GPN-loop GTPase family. Heterodimer with GPN3. Binds to RNA polymerase II (RNAPII). Interacts directly with RNAPII subunits RPB4 and RPB7 and the CTD of RPB1. Interacts with XPA. As to expression, expressed ubiquitously.

Its subcellular location is the cytoplasm. The protein resides in the nucleus. Functionally, small GTPase required for proper nuclear import of RNA polymerase II (RNAPII). May act at an RNAP assembly step prior to nuclear import. Forms an interface between the RNA polymerase II enzyme and chaperone/scaffolding proteins, suggesting that it is required to connect RNA polymerase II to regulators of protein complex formation. May be involved in nuclear localization of XPA. The chain is GPN-loop GTPase 1 from Homo sapiens (Human).